The following is an 885-amino-acid chain: Dual serine/threonine and tyrosine protein kinase (885 aa).

The Protein kinase domain occupies 614–868; that stretch reads PKLGRELGRG…PLLGIVQPGL (255 aa). ATP is bound by residues 620-628 and Lys643; that span reads LGRGQYGVV. The active-site Proton acceptor is Asp739.

The protein belongs to the protein kinase superfamily. Ser/Thr protein kinase family.

It is found in the cytoplasm. It localises to the cell membrane. The protein localises to the apical cell membrane. Its subcellular location is the basolateral cell membrane. The protein resides in the cell junction. It carries out the reaction L-seryl-[protein] + ATP = O-phospho-L-seryl-[protein] + ADP + H(+). It catalyses the reaction L-threonyl-[protein] + ATP = O-phospho-L-threonyl-[protein] + ADP + H(+). The catalysed reaction is L-tyrosyl-[protein] + ATP = O-phospho-L-tyrosyl-[protein] + ADP + H(+). Functionally, may act as a positive regulator of ERK phosphorylation downstream of fibroblast growth factor-receptor activation. May induce both caspase-dependent apoptosis and caspase-independent cell death. Plays a role in the embryonic development. The protein is Dual serine/threonine and tyrosine protein kinase (dstyk) of Danio rerio (Zebrafish).